Reading from the N-terminus, the 123-residue chain is Large ribosomal subunit protein uL29 (123 aa).

K19 carries the N6-acetyllysine modification. K25 is covalently cross-linked (Glycyl lysine isopeptide (Lys-Gly) (interchain with G-Cter in SUMO2)). S29 bears the Phosphoserine mark. Position 43 is an N6-acetyllysine (K43).

Belongs to the universal ribosomal protein uL29 family. As to quaternary structure, component of the large ribosomal subunit.

It localises to the cytoplasm. Functionally, component of the large ribosomal subunit. The ribosome is a large ribonucleoprotein complex responsible for the synthesis of proteins in the cell. The protein is Large ribosomal subunit protein uL29 (RPL35) of Sus scrofa (Pig).